A 389-amino-acid polypeptide reads, in one-letter code: 5-hydroxytryptamine receptor 1B (389 aa).

Topologically, residues 1 to 45 (MGNPEASCTPPAVLGSQTGLPHANVSAPPNNCSAPSHIYQDSIAL) are extracellular. Residues Asn24 and Asn31 are each glycosylated (N-linked (GlcNAc...) asparagine). A helical membrane pass occupies residues 46–71 (PWKVLLVVLLALITLATTLSNAFVIA). Over 72–85 (TVYRTRKLHTPANY) the chain is Cytoplasmic. The chain crosses the membrane as a helical span at residues 86–110 (LIASLAFTDLLVSILVMPISTMYTV). At 111–118 (TGRWTLGQ) the chain is on the extracellular side. Residues 119–144 (ALCDFWLSSDITCCTASIMHLCVIAL) traverse the membrane as a helical segment. A disulfide bridge links Cys121 with Cys198. Asp128 and Thr133 together coordinate ergotamine. Positions 145–147 (DRY) match the DRY motif; important for ligand-induced conformation changes and signaling motif. At 145–164 (DRYWAITDAVGYSAKRTPRR) the chain is on the cytoplasmic side. A helical transmembrane segment spans residues 165-183 (AAGMIALVWVFSICISLPP). Residues 184–204 (FFWRQAKAEEEVLDCLVNTDH) lie on the Extracellular side of the membrane. Residue Val200 participates in ergotamine binding. The helical transmembrane segment at 205 to 228 (VLYTVYSTGGAFYLPTLLLIALYG) threads the bilayer. The Cytoplasmic portion of the chain corresponds to 229-314 (RIYVEARSRI…AARERKATKT (86 aa)). The helical transmembrane segment at 315–336 (LGVILGAFIVCWLPFFIISLVM) threads the bilayer. At 337 to 346 (PICKDACWFH) the chain is on the extracellular side. A helical transmembrane segment spans residues 347-369 (MAIFDFFTWLGYLNSLINPIIYT). The NPxxY motif; important for ligand-induced conformation changes and signaling motif lies at 364–368 (NPIIY). Residues 370 to 389 (MSNEDFKQAFHKLIRFKCTT) lie on the Cytoplasmic side of the membrane. Cys387 carries the S-palmitoyl cysteine lipid modification.

The protein belongs to the G-protein coupled receptor 1 family. Homodimer. Heterodimer with HTR1D. Phosphorylated. Desensitization of the receptor may be mediated by its phosphorylation. Post-translationally, palmitoylated.

It is found in the cell membrane. Functionally, G-protein coupled receptor for 5-hydroxytryptamine (serotonin). Also functions as a receptor for ergot alkaloid derivatives, various anxiolytic and antidepressant drugs and other psychoactive substances, such as lysergic acid diethylamide (LSD). Ligand binding causes a conformation change that triggers signaling via guanine nucleotide-binding proteins (G proteins) and modulates the activity of downstream effectors, such as adenylate cyclase. HTR1B is coupled to G(i)/G(o) G alpha proteins and mediates inhibitory neurotransmission by inhibiting adenylate cyclase activity. Arrestin family members inhibit signaling via G proteins and mediate activation of alternative signaling pathways. Regulates the release of 5-hydroxytryptamine, dopamine and acetylcholine in the brain, and thereby affects neural activity, nociceptive processing, pain perception, mood and behavior. Besides, plays a role in vasoconstriction of cerebral arteries. The sequence is that of 5-hydroxytryptamine receptor 1B (HTR1B) from Cavia porcellus (Guinea pig).